An 856-amino-acid polypeptide reads, in one-letter code: Leucine--tRNA ligase (856 aa).

The short motif at 53 to 63 is the 'HIGH' region element; it reads PYPSGNLHMGH. Residues 622 to 626 carry the 'KMSKS' region motif; it reads KMSKS. K625 contributes to the ATP binding site.

It belongs to the class-I aminoacyl-tRNA synthetase family.

It localises to the cytoplasm. It carries out the reaction tRNA(Leu) + L-leucine + ATP = L-leucyl-tRNA(Leu) + AMP + diphosphate. The sequence is that of Leucine--tRNA ligase from Prochlorococcus marinus (strain MIT 9215).